The primary structure comprises 477 residues: UDP-N-acetylmuramate--L-alanine ligase (477 aa).

An ATP-binding site is contributed by 122–128 (GTHGKTT).

This sequence belongs to the MurCDEF family.

It localises to the cytoplasm. It carries out the reaction UDP-N-acetyl-alpha-D-muramate + L-alanine + ATP = UDP-N-acetyl-alpha-D-muramoyl-L-alanine + ADP + phosphate + H(+). It participates in cell wall biogenesis; peptidoglycan biosynthesis. In terms of biological role, cell wall formation. In Xanthomonas campestris pv. campestris (strain 8004), this protein is UDP-N-acetylmuramate--L-alanine ligase.